The following is a 174-amino-acid chain: Probasin (174 aa).

The signal sequence occupies residues 1–18 (MMRVIILLLTLHVLGVSS). Cys-77 and Cys-168 form a disulfide bridge.

It belongs to the calycin superfamily. Lipocalin family.

The protein localises to the secreted. The polypeptide is Probasin (Pbsn) (Mus musculus (Mouse)).